A 302-amino-acid chain; its full sequence is Glutaminase (302 aa).

Substrate contacts are provided by Ser-61, Asn-111, Glu-155, Asn-162, Tyr-186, Tyr-238, and Val-256.

It belongs to the glutaminase family. Homotetramer.

The enzyme catalyses L-glutamine + H2O = L-glutamate + NH4(+). The polypeptide is Glutaminase (Pseudomonas putida (strain ATCC 700007 / DSM 6899 / JCM 31910 / BCRC 17059 / LMG 24140 / F1)).